Consider the following 371-residue polypeptide: Peptidyl-prolyl cis-trans isomerase D (371 aa).

Residues 11–172 (FFDIQIGNEK…KDVTIVECGE (162 aa)) form the PPIase cyclophilin-type domain. A disordered region spans residues 175–195 (GQDYDDADKQTPDATGDPYED). TPR repeat units lie at residues 214–247 (ASEL…LHEF), 267–300 (FALH…ANAA), and 308–341 (AKAY…APGD).

Belongs to the cyclophilin-type PPIase family. PPIase D subfamily.

Its subcellular location is the cytoplasm. The enzyme catalyses [protein]-peptidylproline (omega=180) = [protein]-peptidylproline (omega=0). Functionally, PPIases accelerate the folding of proteins. It catalyzes the cis-trans isomerization of proline imidic peptide bonds in oligopeptides. This chain is Peptidyl-prolyl cis-trans isomerase D (cpr6), found in Aspergillus oryzae (strain ATCC 42149 / RIB 40) (Yellow koji mold).